The primary structure comprises 325 residues: Chain length determinant protein (325 aa).

At 1 to 31 (MRVENNNVSGQNHDPEQIDLIDLLVQLWRGK) the chain is on the cytoplasmic side. Residues 32–52 (MTIIISVIVAIALAIGYLAVA) form a helical membrane-spanning segment. The Periplasmic segment spans residues 53–294 (KEKWTSTAII…LPIRRDSPKK (242 aa)). The chain crosses the membrane as a helical span at residues 295–315 (AITLILAVLLGGMVGAGIVLG). Residues 316 to 325 (RNALRNYNAK) lie on the Cytoplasmic side of the membrane.

It belongs to the WzzB/Cld/Rol family.

Its subcellular location is the cell inner membrane. Its pathway is bacterial outer membrane biogenesis; lipopolysaccharide biosynthesis. Its function is as follows. Confers a modal distribution of chain length on the O-antigen component of lipopolysaccharide (LPS). Gives rise to a reduced number of short chain molecules and increases in numbers of longer molecules. This is Chain length determinant protein (wzzB) from Shigella flexneri.